The primary structure comprises 299 residues: Methionine aminopeptidase (299 aa).

His-64 is a substrate binding site. Asp-84, Asp-95, and His-158 together coordinate a divalent metal cation. His-166 contacts substrate. Residues Glu-191 and Glu-284 each coordinate a divalent metal cation.

Belongs to the peptidase M24A family. Methionine aminopeptidase archaeal type 2 subfamily. In terms of assembly, monomer. Co(2+) is required as a cofactor. Zn(2+) serves as cofactor. Requires Mn(2+) as cofactor. It depends on Fe(2+) as a cofactor.

It catalyses the reaction Release of N-terminal amino acids, preferentially methionine, from peptides and arylamides.. Its function is as follows. Removes the N-terminal methionine from nascent proteins. The N-terminal methionine is often cleaved when the second residue in the primary sequence is small and uncharged (Met-Ala-, Cys, Gly, Pro, Ser, Thr, or Val). The polypeptide is Methionine aminopeptidase (Methanothermobacter thermautotrophicus (strain ATCC 29096 / DSM 1053 / JCM 10044 / NBRC 100330 / Delta H) (Methanobacterium thermoautotrophicum)).